The following is a 927-amino-acid chain: MNMKKKEKHAIRKKSIGVASVLVGTLIGFGLLSSKEADASENSVTQSDSASNESKSNDSSSVSAAPKTDDTNVSDTKTSSNTNNGETSVAQNPAQQETTQSSSTNATTEETPVTGEATTTTTNQANTPATTQSSNTNAEELVNQTSNETTSNDTNTVSSVNSPQNSTNAENVSTTQDTSTEATPSNNESAPQSTDASNKDVVNQAVNTSAPRMRAFSLAAVAADAPVAGTDITNQLTNVTVGIDSGTTVYPHQAGYVKLNYGFSVPNSAVKGDTFKITVPKELNLNGVTSTAKVPPIMAGDQVLANGVIDSDGNVIYTFTDYVNTKDDVKATLTMPAYIDPENVKKTGNVTLATGIGSTTANKTVLVDYEKYGKFYNLSIKGTIDQIDKTNNTYRQTIYVNPSGDNVIAPVLTGNLKPNTDSNALIDQQNTSIKVYKVDNAADLSESYFVNPENFEDVTNSVNITFPNPNQYKVEFNTPDDQITTPYIVVVNGHIDPNSKGDLALRSTLYGYNSNIIWRSMSWDNEVAFNNGSGSGDGIDKPVVPEQPDEPGEIEPIPEDSDSDPGSDSGSDSNSDSGSDSGSDSTSDSGSDSASDSDSASDSDSASDSDSASDSDSASDSDSDNDSDSDSDSDSDSDSDSDSDSDSDSDSDSDSDSDSDSDSDSDSDSDSDSDSDSDSDSDSDSDSDSDSDSDSDSDSDSDSDSDSDSDSDSDSDSDSDSDSDSDSDSDSDSDSDSDSDSDSDSDSDSDSDSDSDSDSDSDSDSDSASDSDSDSDSDSDSDSDSDSDSDSDSDSDSDSDSDSDSDSESDSDSDSDSDSDSDSDSDSDSDSASDSDSGSDSDSSSDSDSESDSNSDSESVSNNNVVPPNSPKNGTNASNKNEAKDSKEPLPDTGSEDEANTSLIWGLLASIGSLLLFRRKKENKDKK.

Residues 1 to 39 (MNMKKKEKHAIRKKSIGVASVLVGTLIGFGLLSSKEADA) form the signal peptide. A YSIRK-G/S signaling motif motif is present at residues 9–20 (HAIRKKSIGVAS). Disordered regions lie at residues 34–200 (SKEA…SNKD) and 529–898 (FNNG…SEDE). The segment at 40-542 (SENSVTQSDS…SGSGDGIDKP (503 aa)) is ligand binding A region. Over residues 47–65 (SDSASNESKSNDSSSVSAA) the composition is skewed to low complexity. Residues 71-105 (TNVSDTKTSSNTNNGETSVAQNPAQQETTQSSSTN) are compositionally biased toward polar residues. 2 stretches are compositionally biased toward low complexity: residues 106–132 (ATTEETPVTGEATTTTTNQANTPATTQ) and 143–162 (NQTSNETTSNDTNTVSSVNS). Positions 163–200 (PQNSTNAENVSTTQDTSTEATPSNNESAPQSTDASNKD) are enriched in polar residues. Residues 547–565 (QPDEPGEIEPIPEDSDSDP) show a composition bias toward acidic residues. Low complexity predominate over residues 566–598 (GSDSGSDSNSDSGSDSGSDSTSDSGSDSASDSD). Residues 599–855 (SASDSDSASD…DSDSESDSNS (257 aa)) are compositionally biased toward acidic residues. Low complexity predominate over residues 856-867 (DSESVSNNNVVP). The segment covering 881-890 (NEAKDSKEPL) has biased composition (basic and acidic residues). The short motif at 890 to 894 (LPDTG) is the LPXTG sorting signal element. A Pentaglycyl murein peptidoglycan amidated threonine modification is found at Thr-893. A propeptide spans 894–927 (GSEDEANTSLIWGLLASIGSLLLFRRKKENKDKK) (removed by sortase).

The protein belongs to the serine-aspartate repeat-containing protein (SDr) family.

Its subcellular location is the secreted. It is found in the cell wall. Its function is as follows. Cell surface-associated protein implicated in virulence. Promotes bacterial attachment exclusively to the gamma-chain of human fibrinogen. Induces formation of bacterial clumps, which diminish the ability of group IIA phospholipase A2 to cause bacterial phospholipid hydrolysis and killing. Significantly decreases macrophage phagocytosis possibly thanks to the clumps, clumped bacteria being too large to be phagocytosed. Dominant factor responsible for human platelet aggregation, which may be an important mechanism for initiating infective endocarditis. Enhances spleen cell proliferative response in vitro, contributing significantly to the immunostimulatory activity of S.aureus. The protein is Clumping factor A (clfA) of Staphylococcus aureus (strain NCTC 8325 / PS 47).